The following is a 418-amino-acid chain: MTLLALGINHKTAPVSLRERVSFSPDKLDQALDSLLAQPMVQAGVVLSTCNRTELYLSVEERDDLQEALIRWLCDYHNLNEDDLRNSLYWHQDNDAVSHLMRVASGLDSLVLGEPQILGQVKKAFADSQKGHMKASELERMFQKSFSVAKRVRTETDIGASAVSVAFAACTLARQIFESLSTVTVLLVGAGETIELVARHLREHKVQKMIIANRTRERAQILADEVGAEVIALSDIDERLREADIIISSTASPLPIIGKGMVERALKSRRNQPMLLVDIAVPRDVEPEVGKLANAYLYSVDDLQSIISHNLAQRKAAAVEAETIVAQEASEFMAWLRAQSASETIRDYRSQAEQVRDELTAKALAALEQGGDAQTIMQDLAWKLTNRLIHAPTKSLQQAARDGDNERLNILRDSLGLE.

Substrate is bound by residues 49-52, Ser109, 114-116, and Gln120; these read TCNR and EPQ. The active-site Nucleophile is Cys50. NADP(+) is bound at residue 189 to 194; sequence GAGETI.

It belongs to the glutamyl-tRNA reductase family. In terms of assembly, homodimer.

The catalysed reaction is (S)-4-amino-5-oxopentanoate + tRNA(Glu) + NADP(+) = L-glutamyl-tRNA(Glu) + NADPH + H(+). It functions in the pathway porphyrin-containing compound metabolism; protoporphyrin-IX biosynthesis; 5-aminolevulinate from L-glutamyl-tRNA(Glu): step 1/2. Its function is as follows. Catalyzes the NADPH-dependent reduction of glutamyl-tRNA(Glu) to glutamate 1-semialdehyde (GSA). In Escherichia coli O6:K15:H31 (strain 536 / UPEC), this protein is Glutamyl-tRNA reductase.